The following is a 513-amino-acid chain: 2,3-bisphosphoglycerate-independent phosphoglycerate mutase (513 aa).

Mn(2+) is bound by residues D14 and S64. S64 acts as the Phosphoserine intermediate in catalysis. Residues H125, 155-156, R187, R193, 259-262, and K333 each bind substrate; these read RD and RADR. 5 residues coordinate Mn(2+): D400, H404, D441, H442, and H460.

It belongs to the BPG-independent phosphoglycerate mutase family. As to quaternary structure, monomer. The cofactor is Mn(2+).

The enzyme catalyses (2R)-2-phosphoglycerate = (2R)-3-phosphoglycerate. Its pathway is carbohydrate degradation; glycolysis; pyruvate from D-glyceraldehyde 3-phosphate: step 3/5. In terms of biological role, catalyzes the interconversion of 2-phosphoglycerate and 3-phosphoglycerate. This Pseudomonas fluorescens (strain ATCC BAA-477 / NRRL B-23932 / Pf-5) protein is 2,3-bisphosphoglycerate-independent phosphoglycerate mutase.